The sequence spans 480 residues: UDP-N-acetylmuramate--L-alanine ligase (480 aa).

122-128 is a binding site for ATP; sequence GTHGKTT.

It belongs to the MurCDEF family.

Its subcellular location is the cytoplasm. The enzyme catalyses UDP-N-acetyl-alpha-D-muramate + L-alanine + ATP = UDP-N-acetyl-alpha-D-muramoyl-L-alanine + ADP + phosphate + H(+). It functions in the pathway cell wall biogenesis; peptidoglycan biosynthesis. In terms of biological role, cell wall formation. The protein is UDP-N-acetylmuramate--L-alanine ligase of Pseudomonas aeruginosa (strain LESB58).